The sequence spans 36 residues: Pancreatic polypeptide (36 aa).

Tyrosine 36 is modified (tyrosine amide).

The protein belongs to the NPY family.

It localises to the secreted. Functionally, hormone secreted by pancreatic cells that acts as a regulator of pancreatic and gastrointestinal functions probably by signaling through the G protein-coupled receptor NPY4R2. The sequence is that of Pancreatic polypeptide (PPY) from Equus przewalskii (Przewalski's horse).